The primary structure comprises 142 residues: Large ribosomal subunit protein bL17 (142 aa).

This sequence belongs to the bacterial ribosomal protein bL17 family. As to quaternary structure, part of the 50S ribosomal subunit. Contacts protein L32.

This Chlamydia pneumoniae (Chlamydophila pneumoniae) protein is Large ribosomal subunit protein bL17.